The sequence spans 418 residues: Glutamyl-tRNA(Gln) amidotransferase subunit D (418 aa).

The Asparaginase/glutaminase domain occupies 74-405; it reads KNISILSTGG…EEAKELMPKN (332 aa). Catalysis depends on residues Thr-84, Thr-160, Asp-161, and Lys-237.

The protein belongs to the asparaginase 1 family. GatD subfamily. Heterodimer of GatD and GatE.

It carries out the reaction L-glutamyl-tRNA(Gln) + L-glutamine + ATP + H2O = L-glutaminyl-tRNA(Gln) + L-glutamate + ADP + phosphate + H(+). Functionally, allows the formation of correctly charged Gln-tRNA(Gln) through the transamidation of misacylated Glu-tRNA(Gln) in organisms which lack glutaminyl-tRNA synthetase. The reaction takes place in the presence of glutamine and ATP through an activated gamma-phospho-Glu-tRNA(Gln). The GatDE system is specific for glutamate and does not act on aspartate. The sequence is that of Glutamyl-tRNA(Gln) amidotransferase subunit D from Methanococcus maripaludis (strain C6 / ATCC BAA-1332).